Reading from the N-terminus, the 340-residue chain is Cobalt-precorrin-5B C(1)-methyltransferase (340 aa).

This sequence belongs to the CbiD family.

It carries out the reaction Co-precorrin-5B + S-adenosyl-L-methionine = Co-precorrin-6A + S-adenosyl-L-homocysteine. It functions in the pathway cofactor biosynthesis; adenosylcobalamin biosynthesis; cob(II)yrinate a,c-diamide from sirohydrochlorin (anaerobic route): step 6/10. Catalyzes the methylation of C-1 in cobalt-precorrin-5B to form cobalt-precorrin-6A. This Methanococcoides burtonii (strain DSM 6242 / NBRC 107633 / OCM 468 / ACE-M) protein is Cobalt-precorrin-5B C(1)-methyltransferase.